The sequence spans 485 residues: Aspartyl/glutamyl-tRNA(Asn/Gln) amidotransferase subunit B (485 aa).

The protein belongs to the GatB/GatE family. GatB subfamily. Heterotrimer of A, B and C subunits.

It carries out the reaction L-glutamyl-tRNA(Gln) + L-glutamine + ATP + H2O = L-glutaminyl-tRNA(Gln) + L-glutamate + ADP + phosphate + H(+). The enzyme catalyses L-aspartyl-tRNA(Asn) + L-glutamine + ATP + H2O = L-asparaginyl-tRNA(Asn) + L-glutamate + ADP + phosphate + 2 H(+). In terms of biological role, allows the formation of correctly charged Asn-tRNA(Asn) or Gln-tRNA(Gln) through the transamidation of misacylated Asp-tRNA(Asn) or Glu-tRNA(Gln) in organisms which lack either or both of asparaginyl-tRNA or glutaminyl-tRNA synthetases. The reaction takes place in the presence of glutamine and ATP through an activated phospho-Asp-tRNA(Asn) or phospho-Glu-tRNA(Gln). The sequence is that of Aspartyl/glutamyl-tRNA(Asn/Gln) amidotransferase subunit B from Cupriavidus taiwanensis (strain DSM 17343 / BCRC 17206 / CCUG 44338 / CIP 107171 / LMG 19424 / R1) (Ralstonia taiwanensis (strain LMG 19424)).